Here is a 432-residue protein sequence, read N- to C-terminus: Adenylosuccinate synthetase (432 aa).

Residues 13–19 and 41–43 contribute to the GTP site; these read GDEGKGK and GHT. Asp14 functions as the Proton acceptor in the catalytic mechanism. The Mg(2+) site is built by Asp14 and Gly41. IMP contacts are provided by residues 14–17, 39–42, Thr130, Arg144, Gln225, Thr240, and Arg304; these read DEGK and NAGH. The Proton donor role is filled by His42. Residue 300–306 participates in substrate binding; that stretch reads ATTGRRR. GTP contacts are provided by residues Arg306, 332–334, and 415–417; these read KLD and STG.

It belongs to the adenylosuccinate synthetase family. Homodimer. Mg(2+) is required as a cofactor.

It is found in the cytoplasm. The enzyme catalyses IMP + L-aspartate + GTP = N(6)-(1,2-dicarboxyethyl)-AMP + GDP + phosphate + 2 H(+). It functions in the pathway purine metabolism; AMP biosynthesis via de novo pathway; AMP from IMP: step 1/2. Plays an important role in the de novo pathway of purine nucleotide biosynthesis. Catalyzes the first committed step in the biosynthesis of AMP from IMP. This Salmonella heidelberg (strain SL476) protein is Adenylosuccinate synthetase.